Reading from the N-terminus, the 296-residue chain is Acetylglutamate kinase (296 aa).

Residues 66–67 (GG), Arg88, and Asn191 contribute to the substrate site.

Belongs to the acetylglutamate kinase family. ArgB subfamily.

It is found in the cytoplasm. The catalysed reaction is N-acetyl-L-glutamate + ATP = N-acetyl-L-glutamyl 5-phosphate + ADP. It functions in the pathway amino-acid biosynthesis; L-arginine biosynthesis; N(2)-acetyl-L-ornithine from L-glutamate: step 2/4. Functionally, catalyzes the ATP-dependent phosphorylation of N-acetyl-L-glutamate. The protein is Acetylglutamate kinase of Lawsonia intracellularis (strain PHE/MN1-00).